We begin with the raw amino-acid sequence, 215 residues long: Ras-related protein RAB1BV (215 aa).

GTP-binding positions include 22-29, 70-74, and 128-131; these read GDSGVGKS, DTAGQ, and NKAD. Positions 183–215 are disordered; the sequence is DSDTRQEAQPSITIKPADQSGNQAAAKSACCGS. 2 S-geranylgeranyl cysteine lipidation sites follow: Cys-212 and Cys-213.

Belongs to the small GTPase superfamily. Rab family.

It is found in the cell membrane. The polypeptide is Ras-related protein RAB1BV (RAB1BV) (Beta vulgaris (Sugar beet)).